We begin with the raw amino-acid sequence, 320 residues long: ATP-dependent 6-phosphofructokinase (320 aa).

Residue glycine 12 coordinates ATP. 22 to 26 serves as a coordination point for ADP; sequence RGVVR. ATP-binding positions include 73–74 and 103–106; these read RF and GDGS. Aspartate 104 is a Mg(2+) binding site. A substrate-binding site is contributed by 126-128; that stretch reads TID. The active-site Proton acceptor is the aspartate 128. Arginine 155 is a binding site for ADP. Substrate is bound by residues arginine 163 and 170–172; that span reads MGR. ADP-binding positions include 186-188, lysine 212, and 214-216; these read GCE and KKH. Substrate is bound by residues glutamate 223, arginine 244, and 250 to 253; that span reads HIQR.

It belongs to the phosphofructokinase type A (PFKA) family. ATP-dependent PFK group I subfamily. Prokaryotic clade 'B1' sub-subfamily. Homotetramer. Mg(2+) serves as cofactor.

The protein localises to the cytoplasm. It catalyses the reaction beta-D-fructose 6-phosphate + ATP = beta-D-fructose 1,6-bisphosphate + ADP + H(+). The protein operates within carbohydrate degradation; glycolysis; D-glyceraldehyde 3-phosphate and glycerone phosphate from D-glucose: step 3/4. Its activity is regulated as follows. Allosterically activated by ADP and other diphosphonucleosides, and allosterically inhibited by phosphoenolpyruvate. Functionally, catalyzes the phosphorylation of D-fructose 6-phosphate to fructose 1,6-bisphosphate by ATP, the first committing step of glycolysis. The protein is ATP-dependent 6-phosphofructokinase of Aliivibrio fischeri (strain ATCC 700601 / ES114) (Vibrio fischeri).